Consider the following 365-residue polypeptide: Probable ethanolamine-phosphate cytidylyltransferase (365 aa).

Positions 344-365 (EERQRRKMGKNATEQTTIKTYA) are disordered. The span at 355–365 (ATEQTTIKTYA) shows a compositional bias: polar residues.

It belongs to the cytidylyltransferase family.

The enzyme catalyses phosphoethanolamine + CTP + H(+) = CDP-ethanolamine + diphosphate. It participates in phospholipid metabolism; phosphatidylethanolamine biosynthesis; phosphatidylethanolamine from ethanolamine: step 2/3. In Schizosaccharomyces pombe (strain 972 / ATCC 24843) (Fission yeast), this protein is Probable ethanolamine-phosphate cytidylyltransferase.